The sequence spans 297 residues: Transmembrane protein 178A (297 aa).

The first 25 residues, 1-25 (MEPRALVTALSLGLSLCSLGLLVTA), serve as a signal peptide directing secretion. At 26-179 (IFTDHWYETD…LLHLRRITAG (154 aa)) the chain is on the extracellular side. A compositionally biased stretch (basic and acidic residues) spans 41 to 57 (ESCERSRAGADPPDQKN). The disordered stretch occupies residues 41–86 (ESCERSRAGADPPDQKNRLMPLSHLPLRDSPPLGRRLLPGGPGRSD). Low complexity predominate over residues 68–79 (RDSPPLGRRLLP). Asn-158 carries N-linked (GlcNAc...) asparagine glycosylation. A helical transmembrane segment spans residues 180-200 (FLGMAVAVLLCGCIVATVSFF). The Cytoplasmic portion of the chain corresponds to 201 to 208 (WEESLTQH). The helical transmembrane segment at 209–229 (VAGLLFLMTGIFCTISLCTYA) threads the bilayer. The Extracellular segment spans residues 230–257 (ASVSYDLNRVPKLIYSLPHDVEHGYSWS). The helical transmembrane segment at 258-278 (IFCAWCSLGFIVAAGGLCIAY) threads the bilayer. At 279 to 297 (PFISRTKIAHLKSGRDSTV) the chain is on the cytoplasmic side.

Belongs to the TMEM178 family. Interacts with STIM1.

The protein localises to the endoplasmic reticulum membrane. Its function is as follows. Acts as a negative regulator of osteoclast differentiation in basal and inflammatory conditions by regulating TNFSF11-induced Ca (2+) fluxes, thereby controlling the induction of NFATC1. This Rattus norvegicus (Rat) protein is Transmembrane protein 178A (Tmem178a).